We begin with the raw amino-acid sequence, 462 residues long: Lysophospholipid acyltransferase 1 (462 aa).

Transmembrane regions (helical) follow at residues 9 to 29, 52 to 72, 84 to 104, 158 to 178, 211 to 231, 263 to 283, 353 to 373, 396 to 416, and 431 to 451; these read SIGV…TIPV, FLSY…PMTI, CGII…VFYM, SLIE…GPVY, AILQ…QYPL, YFIW…FSGW, AVWH…ALMI, IMVF…AVGF, and VYYI…VVPA. The active site involves His356.

This sequence belongs to the membrane-bound acyltransferase family. As to expression, expressed in roots, rosette leaves, petals, stigma, chalazal endosperm of developing seeds and vascular bundles of siliques.

The protein resides in the endoplasmic reticulum membrane. It carries out the reaction a 1-acyl-sn-glycero-3-phosphocholine + an acyl-CoA = a 1,2-diacyl-sn-glycero-3-phosphocholine + CoA. The enzyme catalyses 1-(9Z-octadecenoyl)-sn-glycero-3-phosphocholine + (9Z)-octadecenoyl-CoA = 1,2-di-(9Z-octadecenoyl)-sn-glycero-3-phosphocholine + CoA. It catalyses the reaction 1-(9Z-octadecenoyl)-sn-glycero-3-phosphocholine + (9Z,12Z)-octadecadienoyl-CoA = 1-(9Z)-octadecenoyl-2-(9Z,12Z)-octadecadienoyl-sn-glycero-3-phosphocholine + CoA. The catalysed reaction is (9Z,12Z,15Z)-octadecatrienoyl-CoA + 1-(9Z-octadecenoyl)-sn-glycero-3-phosphocholine = 1-(9Z-octadecaenoyl)-2-(9Z,12Z,15Z-octadecatrienoyl)-sn-glycero-3-phosphocholine + CoA. It carries out the reaction a 1-acyl-sn-glycero-3-phosphoethanolamine + an acyl-CoA = a 1,2-diacyl-sn-glycero-3-phosphoethanolamine + CoA. The enzyme catalyses a 1-acyl-sn-glycero-3-phospho-L-serine + an acyl-CoA = a 1,2-diacyl-sn-glycero-3-phospho-L-serine + CoA. Its function is as follows. Lysophospholipid acyltransferase with broad specificity. Mediates the conversion of lysophosphatidylethanolamine (1-acyl-sn-glycero-3-phosphoethanolamine or LPE) into phosphatidylethanolamine (1,2-diacyl-sn-glycero-3-phosphoethanolamine or PE) (LPEAT activity). Catalyzes the acylation of lysophosphatidylserine (1-acyl-2-hydroxy-sn-glycero-3-phospho-L-serine or LPS) into phosphatidylserine (1,2-diacyl-sn-glycero-3-phospho-L-serine or PS) (LPSAT activity). Can convert lysophosphatidylcholine (1-acyl-sn-glycero-3-phosphocholine or LPC) into phosphatidylcholine (1,2-diacyl-sn-glycero-3-phosphocholine or PC) (LPCAT activity). Exhibits preference for C18-unsaturated acyl-CoA when transferring an acyl group to lysophosphatidylcholine. Can also utilize lysophosphatidylglycerol (LPG) as substrate in vitro. Has neither activity towards lysophosphatidic acid (LPA) nor lysophosphatidylinositol (LPI). Lysophospholipid acyltransferases catalyze the reacylation step of the phospholipid remodeling pathway also known as the Lands cycle. The primary function of the Lands cycle is to provide a route for acyl remodeling to modify fatty acid (FA) composition of phospholipids derived from the Kennedy pathway. Is involved in PC acyl editing and phosphocholine headgroup exchange between PC and diacylglycerols. This processes control the majority of acyl fluxes through PC to provide polyunsaturated fatty acids for triacylglycerols synthesis in seeds. Involved with LPCAT2 in the direct incorporation of newly synthesized fatty acids exported form the chloroplast into PC through acyl editing. The protein is Lysophospholipid acyltransferase 1 of Arabidopsis thaliana (Mouse-ear cress).